Here is a 112-residue protein sequence, read N- to C-terminus: Large ribosomal subunit protein uL18 (112 aa).

Belongs to the universal ribosomal protein uL18 family. As to quaternary structure, part of the 50S ribosomal subunit; part of the 5S rRNA/L5/L18/L25 subcomplex. Contacts the 5S and 23S rRNAs.

Functionally, this is one of the proteins that bind and probably mediate the attachment of the 5S RNA into the large ribosomal subunit, where it forms part of the central protuberance. In Deinococcus deserti (strain DSM 17065 / CIP 109153 / LMG 22923 / VCD115), this protein is Large ribosomal subunit protein uL18.